The primary structure comprises 458 residues: UDP-N-acetylglucosamine 1-carboxyvinyltransferase (458 aa).

34–35 (KN) contacts phosphoenolpyruvate. Arg104 lines the UDP-N-acetyl-alpha-D-glucosamine pocket. Cys128 serves as the catalytic Proton donor. Cys128 is subject to 2-(S-cysteinyl)pyruvic acid O-phosphothioketal. Asp320 and Val342 together coordinate UDP-N-acetyl-alpha-D-glucosamine.

It belongs to the EPSP synthase family. MurA subfamily.

The protein resides in the cytoplasm. The enzyme catalyses phosphoenolpyruvate + UDP-N-acetyl-alpha-D-glucosamine = UDP-N-acetyl-3-O-(1-carboxyvinyl)-alpha-D-glucosamine + phosphate. It functions in the pathway cell wall biogenesis; peptidoglycan biosynthesis. In terms of biological role, cell wall formation. Adds enolpyruvyl to UDP-N-acetylglucosamine. The chain is UDP-N-acetylglucosamine 1-carboxyvinyltransferase from Prochlorococcus marinus (strain NATL2A).